Here is a 318-residue protein sequence, read N- to C-terminus: Magnetosome protein MamM (318 aa).

Positions 1–210 are transmembrane domain (TMD); that stretch reads MRKSGCTVCS…FMDAYRGLMD (210 aa). Transmembrane regions (helical) follow at residues 13–33, 39–59, 81–101, and 117–137; these read IGWVGLAVNTVLMVMKAFVGL, AMLADAMYSLKDMLNALMVVI, FILSMVVSVVFIGLTGYLLVH, and LIVLWAALVSVGVNVAMYFYS. The interval 211 to 318 is C-terminal domain (CTD); sequence HTAGEAVQNR…DEVMLSKVDN (108 aa). Fe cation contacts are provided by Asp-249, His-264, His-285, and Glu-289.

This sequence belongs to the cation diffusion facilitator (CDF) transporter (TC 2.A.4) family. In terms of assembly, forms homodimers via its C-terminal domain (CTD) in the presence of metal cations. Interacts with MamB via their CTD.

The protein localises to the magnetosome membrane. The protein resides in the cell inner membrane. Its function is as follows. Probably plays a role in biomineralization. Required for stable accumulation of MamB. Probably binds and transports iron. May nucleate iron crystal formation. This chain is Magnetosome protein MamM (mamM), found in Paramagnetospirillum magneticum (strain ATCC 700264 / AMB-1) (Magnetospirillum magneticum).